A 444-amino-acid polypeptide reads, in one-letter code: Tubulin beta chain (444 aa).

Positions 11, 69, 138, 142, 143, 144, 204, and 226 each coordinate GTP. Mg(2+) is bound at residue glutamate 69. Positions 423-444 (QQYQDATAEEEGEFDDEEEMDV) are disordered. The span at 429–444 (TAEEEGEFDDEEEMDV) shows a compositional bias: acidic residues.

Belongs to the tubulin family. In terms of assembly, dimer of alpha and beta chains. A typical microtubule is a hollow water-filled tube with an outer diameter of 25 nm and an inner diameter of 15 nM. Alpha-beta heterodimers associate head-to-tail to form protofilaments running lengthwise along the microtubule wall with the beta-tubulin subunit facing the microtubule plus end conferring a structural polarity. Microtubules usually have 13 protofilaments but different protofilament numbers can be found in some organisms and specialized cells. Requires Mg(2+) as cofactor.

The protein resides in the cytoplasm. Its subcellular location is the cytoskeleton. Tubulin is the major constituent of microtubules, a cylinder consisting of laterally associated linear protofilaments composed of alpha- and beta-tubulin heterodimers. Microtubules grow by the addition of GTP-tubulin dimers to the microtubule end, where a stabilizing cap forms. Below the cap, tubulin dimers are in GDP-bound state, owing to GTPase activity of alpha-tubulin. The chain is Tubulin beta chain from Euplotes focardii.